Reading from the N-terminus, the 316-residue chain is Glutathione synthetase (316 aa).

An ATP-grasp domain is found at 124–311 (NEKLAALLFP…IAGLLFDAIE (188 aa)). An ATP-binding site is contributed by 151 to 208 (FVLEHGQAVLKPLDGMGGRSIFRSGSGDPNLNVILETLTDGNRKLTLAQRFIPDITAG). 2 residues coordinate Mg(2+): glutamate 282 and asparagine 284.

This sequence belongs to the prokaryotic GSH synthase family. Mg(2+) serves as cofactor. It depends on Mn(2+) as a cofactor.

It carries out the reaction gamma-L-glutamyl-L-cysteine + glycine + ATP = glutathione + ADP + phosphate + H(+). The protein operates within sulfur metabolism; glutathione biosynthesis; glutathione from L-cysteine and L-glutamate: step 2/2. This chain is Glutathione synthetase, found in Xanthomonas axonopodis pv. citri (strain 306).